We begin with the raw amino-acid sequence, 418 residues long: UDP-N-acetylglucosamine 1-carboxyvinyltransferase (418 aa).

Residue 22–23 (KN) coordinates phosphoenolpyruvate. A UDP-N-acetyl-alpha-D-glucosamine-binding site is contributed by Arg-91. The active-site Proton donor is the Cys-115. 2-(S-cysteinyl)pyruvic acid O-phosphothioketal is present on Cys-115. 2 residues coordinate UDP-N-acetyl-alpha-D-glucosamine: Asp-305 and Ile-327.

It belongs to the EPSP synthase family. MurA subfamily.

The protein resides in the cytoplasm. The enzyme catalyses phosphoenolpyruvate + UDP-N-acetyl-alpha-D-glucosamine = UDP-N-acetyl-3-O-(1-carboxyvinyl)-alpha-D-glucosamine + phosphate. Its pathway is cell wall biogenesis; peptidoglycan biosynthesis. Cell wall formation. Adds enolpyruvyl to UDP-N-acetylglucosamine. The chain is UDP-N-acetylglucosamine 1-carboxyvinyltransferase from Aeromonas salmonicida (strain A449).